We begin with the raw amino-acid sequence, 165 residues long: Fibrinogen-binding protein (165 aa).

The signal sequence occupies residues 1–29 (MKNKLIAKSLLTIAAIGITTTTIASTADA).

Interacts with host fibrinogen alpha chain/FGA. Interacts with host complement protein C3.

The protein localises to the secreted. Extracellular fibrinogen-binding protein that plays an important role in virulence. By interacting with the alpha chain of fibrinogen and its derivative fibrin, enhances a non-functional interaction between fibrinogen and platelets and is responsible for repression of fibrinogen-dependent platelet aggregation. In addition, assembles a fibrinogen protective shield around the bacteria which results in impaired phagocytic clearance by the host. Mechanistically, interacts with host complement C3b deposited on the surface of the bacterium via its C-terminal and then recruits fibrinogen via its N-terminal. The protein is Fibrinogen-binding protein (fib) of Staphylococcus aureus.